A 544-amino-acid polypeptide reads, in one-letter code: pH-responsive protein 2 (544 aa).

The N-terminal stretch at 1–22 is a signal peptide; that stretch reads MLLKSLFPSILAATSFVSSVAA. N-linked (GlcNAc...) asparagine glycosylation is found at Asn-40 and Asn-59. Residues Cys-72 and Cys-101 are joined by a disulfide bond. A glycan (N-linked (GlcNAc...) asparagine) is linked at Asn-147. Cystine bridges form between Cys-214/Cys-347, Cys-232/Cys-263, Cys-369/Cys-420, Cys-378/Cys-444, and Cys-397/Cys-402. N-linked (GlcNAc...) asparagine glycosylation is present at Asn-408. Residues 469 to 514 are disordered; the sequence is GSSGLGTVSGTVRTDTSQSTSDSGSGSSSSSSSSSSSSSSGSSGSK. A lipid anchor (GPI-anchor amidated serine) is attached at Ser-515. Residues 516-544 constitute a propeptide, removed in mature form; that stretch reads AASIVSVNLLTKIATIGISIVVGFGLITM.

It belongs to the glycosyl hydrolase 72 family.

Its subcellular location is the cell membrane. In terms of biological role, required for apical cell growth and plays an essential role in morphogenesis. May be integral to the pathogenic ability of the organism. The chain is pH-responsive protein 2 (PHR2) from Candida albicans (strain SC5314 / ATCC MYA-2876) (Yeast).